Consider the following 1320-residue polypeptide: Protein brunelleschi (1320 aa).

Residues 313 to 411 (HRNSSLQEAG…IPGHQRNGDL (99 aa)) form a disordered region. The segment covering 314 to 327 (RNSSLQEAGTSPLK) has biased composition (polar residues). Residue serine 317 is modified to Phosphoserine. Threonine 329 carries the post-translational modification Phosphothreonine. Residues 329-340 (TPEKWRASDATK) are compositionally biased toward basic and acidic residues. Over residues 345–361 (SDATANNVDSNQPQQRV) the composition is skewed to polar residues. Over residues 362-400 (TSNSSSCSSVSSLVTTATNSSASDTPTTSSSSTSTISAA) the composition is skewed to low complexity. Phosphoserine is present on serine 672. A disordered region spans residues 923-954 (VSTSGHASLPSRVGSPHHRRNEPQNSSFRSTI). Over residues 945–954 (PQNSSFRSTI) the composition is skewed to polar residues.

The protein belongs to the NIBP family. As to quaternary structure, may be part of the multisubunit TRAPP (transport protein particle) complex.

The protein localises to the cytoplasm. It is found in the golgi apparatus. Cooperates with Rab11 and fwd/PI4K to mediate the flow of membrane through the Golgi, which is required to support cleavage furrow ingression, therefore promoting cytokinesis in male meiotic cells. The sequence is that of Protein brunelleschi from Drosophila melanogaster (Fruit fly).